The primary structure comprises 256 residues: Thiazole synthase (256 aa).

Lys-95 functions as the Schiff-base intermediate with DXP in the catalytic mechanism. Residues Gly-156, 182 to 183 (AG), and 204 to 205 (NT) contribute to the 1-deoxy-D-xylulose 5-phosphate site.

This sequence belongs to the ThiG family. As to quaternary structure, homotetramer. Forms heterodimers with either ThiH or ThiS.

It localises to the cytoplasm. The enzyme catalyses [ThiS sulfur-carrier protein]-C-terminal-Gly-aminoethanethioate + 2-iminoacetate + 1-deoxy-D-xylulose 5-phosphate = [ThiS sulfur-carrier protein]-C-terminal Gly-Gly + 2-[(2R,5Z)-2-carboxy-4-methylthiazol-5(2H)-ylidene]ethyl phosphate + 2 H2O + H(+). It functions in the pathway cofactor biosynthesis; thiamine diphosphate biosynthesis. In terms of biological role, catalyzes the rearrangement of 1-deoxy-D-xylulose 5-phosphate (DXP) to produce the thiazole phosphate moiety of thiamine. Sulfur is provided by the thiocarboxylate moiety of the carrier protein ThiS. In vitro, sulfur can be provided by H(2)S. The protein is Thiazole synthase of Idiomarina loihiensis (strain ATCC BAA-735 / DSM 15497 / L2-TR).